Here is a 502-residue protein sequence, read N- to C-terminus: Probable cobyric acid synthase (502 aa).

The GATase cobBQ-type domain occupies 250–448; the sequence is KITIGTLRLP…FHGIFHNFEF (199 aa). The active-site Nucleophile is the cysteine 330. Residue histidine 440 is part of the active site.

Belongs to the CobB/CobQ family. CobQ subfamily.

It functions in the pathway cofactor biosynthesis; adenosylcobalamin biosynthesis. Its function is as follows. Catalyzes amidations at positions B, D, E, and G on adenosylcobyrinic A,C-diamide. NH(2) groups are provided by glutamine, and one molecule of ATP is hydrogenolyzed for each amidation. The protein is Probable cobyric acid synthase of Methanosphaera stadtmanae (strain ATCC 43021 / DSM 3091 / JCM 11832 / MCB-3).